A 1769-amino-acid chain; its full sequence is Tight junction protein 1 (1769 aa).

One can recognise a PDZ 1 domain in the interval 23–110 (TVTLHRAPGF…NAKITIRRKK (88 aa)). The segment covering 102–112 (AKITIRRKKKV) has biased composition (basic residues). Residues 102 to 188 (AKITIRRKKK…QPPKPTKVTL (87 aa)) form a disordered region. Positions 123–135 (PVSENEDSYDEEV) are enriched in acidic residues. S125 carries the phosphoserine modification. Y131 carries the post-translational modification Phosphotyrosine. Residues 148–174 (RRSEKSWARDRSASRERSLSPRSDRRS) show a composition bias toward basic and acidic residues. S174, S177, and S178 each carry phosphoserine. At T184 the chain carries Phosphothreonine. Positions 185–263 (KVTLVKSRKN…KLKMVVQRDE (79 aa)) constitute a PDZ 2 domain. Phosphoserine is present on residues S211 and S240. A Phosphothreonine modification is found at T266. Phosphoserine is present on residues S274, S276, S279, S283, S289, S293, S296, S299, S322, S328, S333, S336, and S352. Residues 295–362 (ASDHSGRSHD…TPVKHADDHT (68 aa)) are disordered. Positions 298–326 (HSGRSHDRPPRHSRSRSPDQRSEPSDHSR) are enriched in basic and acidic residues. At T353 the chain carries Phosphothreonine. The PDZ 3 domain occupies 420–501 (SMKLVKFRKG…GEEVTILAQK (82 aa)). The SH3 domain occupies 515–583 (GDSFYIRTHF…PNKNRAEQLA (69 aa)). A Guanylate kinase-like domain is found at 609–790 (SKRNLRKSRE…WYGALKEAIQ (182 aa)). Residues S616 and S621 each carry the phosphoserine modification. An occludin (OCLN)-binding region region spans residues 632 to 875 (YERVVLREAG…GTPPESAITR (244 aa)). T808 carries the post-translational modification Phosphothreonine. Phosphoserine is present on residues S809 and S820. The residue at position 821 (Y821) is a Phosphotyrosine. A phosphoserine mark is found at S823, S827, and S836. 2 disordered regions span residues 824–976 (APGS…LRTP) and 1010–1067 (EMMR…SYTD). Phosphothreonine is present on residues T845, T847, T853, T860, and T867. Residues 878–891 (EPVREDSSGMHHEN) show a composition bias toward basic and acidic residues. Residues 892-905 (QTYPPYSPQAQPQP) are compositionally biased toward low complexity. The residue at position 911 (S911) is a Phosphoserine. Composition is skewed to polar residues over residues 933–952 (PETN…TLTN) and 962–976 (PSTS…LRTP). Phosphoserine is present on S967. A Phosphoserine modification is found at S1070. 3 disordered regions span residues 1091–1212 (SYYD…KAGH), 1224–1261 (PLIP…MKPQ), and 1273–1589 (KRSA…EFDS). Basic and acidic residues predominate over residues 1108 to 1124 (QHPRDLDSRQHPEESSE). S1138 bears the Phosphoserine mark. 2 positions are modified to phosphotyrosine: Y1139 and Y1164. The actin-binding region (ABR) stretch occupies residues 1150 to 1370 (RTSTLRHEEQ…FDRRSFENKP (221 aa)). The segment covering 1273–1286 (KRSASLENKKDENH) has biased composition (basic and acidic residues). The segment covering 1300-1310 (PGAPIIGPKPT) has biased composition (pro residues). The segment covering 1335–1346 (PPEDIVRSNHYD) has biased composition (basic and acidic residues). Y1353 bears the Phosphotyrosine mark. Phosphoserine is present on S1365. A compositionally biased stretch (polar residues) spans 1387 to 1401 (HSQNQTNFSSYSSKG). Residues 1402-1419 (KSPEADAPDRSFGEKRYE) are compositionally biased toward basic and acidic residues. Position 1412 is a phosphoserine (S1412). Polar residues-rich tracts occupy residues 1460-1471 (NSISLDFQNSLV) and 1514-1523 (AEQTQKTVTP). Residues 1539 to 1548 (PFERKFESPK) are compositionally biased toward basic and acidic residues. Phosphoserine occurs at positions 1546 and 1618. The 135-residue stretch at 1635–1769 (ATARGVFNNN…NCVSVLIDHF (135 aa)) folds into the ZU5 domain.

It belongs to the MAGUK family. Homodimer. Forms heterodimers TJP3. Forms a heterodimer (via PDZ2 domain) with TJP2/ZO2 (via PDZ2 domain). Interacts with OCLN. Interacts with CALM, claudins, CGN/cingulin, CXADR, GJA12, GJD3 and UBN1. Interacts (via ZU5 domain) with CDC42BPB and MYZAP. Interacts (via PDZ domain) with GJA1. Interacts (via PDZ domains) with ANKRD2. Interacts with POPDC1 (via the C-terminus cytoplasmic tail). Interacts with HSPA4. Interacts with KIRREL1. Interacts with DLL1. Interacts with USP53 (via the C-terminal region). Interacts with DNMBP (via C-terminal domain); required for the apical cell-cell junction localization of DNMBP. Interacts with SPEF1. Interacts (via N-terminus) with CTNNA1. Interacts with CLDN18. Interacts with CLDN16 (via TRV motif); this is a prerequisite for anchoring of CLDN16 at the tight junction. Interacts with PKP1; the interaction facilitates TJP1/ZO-1 localization to the plasma membrane. Interacts with PATJ (via PDZ1-6 domains); the interaction is required for attachment and extension of TJP1/ZO1 condensates along the apical cell interface. Phosphorylated at tyrosine redidues in response to epidermal growth factor (EGF). This response is dependent on an intact actin microfilament system. Dephosphorylated by PTPRJ.

The protein resides in the cell membrane. The protein localises to the cell junction. It is found in the tight junction. Its subcellular location is the gap junction. In terms of biological role, TJP1, TJP2, and TJP3 are closely related scaffolding proteins that link tight junction (TJ) transmembrane proteins such as claudins, junctional adhesion molecules, and occludin to the actin cytoskeleton. Forms a multistranded TJP1/ZO1 condensate which elongates to form a tight junction belt, the belt is anchored at the apical cell membrane via interaction with PATJ. The tight junction acts to limit movement of substances through the paracellular space and as a boundary between the compositionally distinct apical and basolateral plasma membrane domains of epithelial and endothelial cells. Necessary for lumenogenesis, and particularly efficient epithelial polarization and barrier formation. Plays a role in the regulation of cell migration by targeting CDC42BPBb to the leading edge of migrating cells. With TJP2 and TJP3, participates in the junctional retention and stability of the transcription factor DBPA, but is not involved in its shuttling to the nucleus. May play a role in mediating cell morphology changes during ameloblast differentiation via its role in tight junctions. This Canis lupus familiaris (Dog) protein is Tight junction protein 1.